Reading from the N-terminus, the 139-residue chain is Nucleoside diphosphate kinase (139 aa).

The ATP site is built by lysine 10, phenylalanine 58, arginine 86, threonine 92, arginine 103, and asparagine 113. Residue histidine 116 is the Pros-phosphohistidine intermediate of the active site.

The protein belongs to the NDK family. In terms of assembly, homotetramer. It depends on Mg(2+) as a cofactor.

The protein resides in the cytoplasm. It catalyses the reaction a 2'-deoxyribonucleoside 5'-diphosphate + ATP = a 2'-deoxyribonucleoside 5'-triphosphate + ADP. The enzyme catalyses a ribonucleoside 5'-diphosphate + ATP = a ribonucleoside 5'-triphosphate + ADP. Functionally, major role in the synthesis of nucleoside triphosphates other than ATP. The ATP gamma phosphate is transferred to the NDP beta phosphate via a ping-pong mechanism, using a phosphorylated active-site intermediate. The polypeptide is Nucleoside diphosphate kinase (Oleidesulfovibrio alaskensis (strain ATCC BAA-1058 / DSM 17464 / G20) (Desulfovibrio alaskensis)).